The primary structure comprises 248 residues: tRNA (guanine-N(1)-)-methyltransferase (248 aa).

S-adenosyl-L-methionine-binding positions include Gly-113 and 133–138 (IGDYVL). The interval 226–248 (ARPAQTIRAKGESQKTPKNKTDG) is disordered. A compositionally biased stretch (basic and acidic residues) spans 234–248 (AKGESQKTPKNKTDG).

It belongs to the RNA methyltransferase TrmD family. Homodimer.

It is found in the cytoplasm. It carries out the reaction guanosine(37) in tRNA + S-adenosyl-L-methionine = N(1)-methylguanosine(37) in tRNA + S-adenosyl-L-homocysteine + H(+). Its function is as follows. Specifically methylates guanosine-37 in various tRNAs. The sequence is that of tRNA (guanine-N(1)-)-methyltransferase from Rhodopseudomonas palustris (strain ATCC BAA-98 / CGA009).